The primary structure comprises 252 residues: Gamma carbonic anhydrase-like 1, mitochondrial (252 aa).

Residues 1 to 29 (MATSIARLSRRGVTSNLIRRCFAAEAALA) constitute a mitochondrion transit peptide. Substrate is bound by residues 99-101 (RGD) and 114-115 (QE). His-120 is a binding site for Zn(2+). Positions 148, 160, and 227 each coordinate substrate.

Belongs to the gamma-class carbonic anhydrase family. In terms of assembly, component of the mitochondrial oxidoreductase respiratory chain complex I; element of the extra matrix-exposed domain, which is attached to the membrane arm of this complex. Interacts with GAMMACA2.

The protein resides in the mitochondrion membrane. Its function is as follows. Involved in complex I assembly in mitochondria and respiration. The sequence is that of Gamma carbonic anhydrase-like 1, mitochondrial (GAMMACAL1) from Arabidopsis thaliana (Mouse-ear cress).